A 179-amino-acid polypeptide reads, in one-letter code: Large ribosomal subunit protein uL5 (179 aa).

It belongs to the universal ribosomal protein uL5 family. Part of the 50S ribosomal subunit; part of the 5S rRNA/L5/L18/L25 subcomplex. Contacts the 5S rRNA and the P site tRNA. Forms a bridge to the 30S subunit in the 70S ribosome.

In terms of biological role, this is one of the proteins that bind and probably mediate the attachment of the 5S RNA into the large ribosomal subunit, where it forms part of the central protuberance. In the 70S ribosome it contacts protein S13 of the 30S subunit (bridge B1b), connecting the 2 subunits; this bridge is implicated in subunit movement. Contacts the P site tRNA; the 5S rRNA and some of its associated proteins might help stabilize positioning of ribosome-bound tRNAs. The protein is Large ribosomal subunit protein uL5 of Shewanella sp. (strain MR-4).